A 979-amino-acid chain; its full sequence is Pimaradiene synthase pbcA (979 aa).

A VYDTAW motif motif is present at residues 34–39 (VYDTAW). Positions 328 to 331 (DADD) match the DXDD B-type cyclization motif motif. 6 residues coordinate Mg(2+): D665, E669, N865, D866, S869, and D873. Positions 665–669 (DEFME) match the DEXXE A-type cyclization motif motif.

Belongs to the terpene synthase family. The cofactor is Mg(2+).

It catalyses the reaction (2E,6E,10E)-geranylgeranyl diphosphate = ent-copalyl diphosphate. The enzyme catalyses ent-copalyl diphosphate = ent-pimara-8(14),15-diene + diphosphate. Its pathway is secondary metabolite biosynthesis; terpenoid biosynthesis. In terms of biological role, bifunctional terpene synthase; part of the gene cluster that mediates the biosynthesis of the diterpene ent-pimara-8(14),15-diene (PD). Within the cluster, the HMG-CoA reductase AN1593 functions in the mevalonate pathway, which produces isoprenoid precursors. The geranylgeranyl pyrophosphate (GGPP) synthase AN1592 is needed in the formation of GGPP, the precursor for diterpenes. Lastly, the pimaradiene synthase pbcA performs the 2 cyclization steps that convert GGPP to ent-pimara-8(14),15-diene with ent-copalyl diphosphate as an intermediate. The putative roles of the remaining cluster enzymes in ent-pimara-8(14),15-diene biosynthesis is unclear. The cytochrome P450 monooxygenase AN1598, the glutathione S-transferase AN1595, the oxidoreductases AN1596 and AN1597 probably function as decorative enzymes. It is possible that in biological conditions the compound is oxidized to ent-pimara-8(14),15-dien-19-oic acid, which is a bioactive diterpene compound predominant in many plant extracts. The protein is Pimaradiene synthase pbcA of Emericella nidulans (strain FGSC A4 / ATCC 38163 / CBS 112.46 / NRRL 194 / M139) (Aspergillus nidulans).